The sequence spans 308 residues: GTPase Era (308 aa).

Positions 14 to 181 constitute an Era-type G domain; it reads RCGFVALIGA…KQALAAMVPP (168 aa). Residues 22–29 form a G1 region; it reads GAPNVGKS. 22–29 contributes to the GTP binding site; that stretch reads GAPNVGKS. The segment at 48 to 52 is G2; that stretch reads QTTRA. Residues 69–72 form a G3 region; sequence DTPG. Residues 69–73 and 131–134 each bind GTP; these read DTPGI and NKVD. The G4 stretch occupies residues 131–134; it reads NKVD. The G5 stretch occupies residues 160–162; it reads ISA. The KH type-2 domain maps to 212 to 289; sequence LHQELPYQST…HLFLFVKVRE (78 aa).

It belongs to the TRAFAC class TrmE-Era-EngA-EngB-Septin-like GTPase superfamily. Era GTPase family. Monomer.

It is found in the cytoplasm. It localises to the cell inner membrane. An essential GTPase that binds both GDP and GTP, with rapid nucleotide exchange. Plays a role in 16S rRNA processing and 30S ribosomal subunit biogenesis and possibly also in cell cycle regulation and energy metabolism. The sequence is that of GTPase Era from Bradyrhizobium sp. (strain BTAi1 / ATCC BAA-1182).